We begin with the raw amino-acid sequence, 86 residues long: Small ribosomal subunit protein bS20 (86 aa).

The tract at residues 1-25 (MTNIKSQQKRNRTNERARLRNKSVK) is disordered.

It belongs to the bacterial ribosomal protein bS20 family.

Binds directly to 16S ribosomal RNA. The sequence is that of Small ribosomal subunit protein bS20 from Mycobacterium leprae (strain Br4923).